Here is a 66-residue protein sequence, read N- to C-terminus: Large ribosomal subunit protein uL29 (66 aa).

Belongs to the universal ribosomal protein uL29 family. In terms of assembly, part of the 50S ribosomal subunit.

This is Large ribosomal subunit protein uL29 from Thermococcus kodakarensis (strain ATCC BAA-918 / JCM 12380 / KOD1) (Pyrococcus kodakaraensis (strain KOD1)).